The chain runs to 1050 residues: Bifunctional glutamine synthetase adenylyltransferase/adenylyl-removing enzyme (1050 aa).

Residues 1-531 (MTDPLIHTRK…LHSQLFYRPL (531 aa)) are adenylyl removase. The adenylyl transferase stretch occupies residues 537-1050 (NLSVDAMKLS…LDSVEARREL (514 aa)).

Belongs to the GlnE family. It depends on Mg(2+) as a cofactor.

It carries out the reaction [glutamine synthetase]-O(4)-(5'-adenylyl)-L-tyrosine + phosphate = [glutamine synthetase]-L-tyrosine + ADP. It catalyses the reaction [glutamine synthetase]-L-tyrosine + ATP = [glutamine synthetase]-O(4)-(5'-adenylyl)-L-tyrosine + diphosphate. Involved in the regulation of glutamine synthetase GlnA, a key enzyme in the process to assimilate ammonia. When cellular nitrogen levels are high, the C-terminal adenylyl transferase (AT) inactivates GlnA by covalent transfer of an adenylyl group from ATP to specific tyrosine residue of GlnA, thus reducing its activity. Conversely, when nitrogen levels are low, the N-terminal adenylyl removase (AR) activates GlnA by removing the adenylyl group by phosphorolysis, increasing its activity. The regulatory region of GlnE binds the signal transduction protein PII (GlnB) which indicates the nitrogen status of the cell. This is Bifunctional glutamine synthetase adenylyltransferase/adenylyl-removing enzyme from Corynebacterium efficiens (strain DSM 44549 / YS-314 / AJ 12310 / JCM 11189 / NBRC 100395).